Consider the following 165-residue polypeptide: MEPSADTHSKPVDIYRDTWVRFLGYANEVGEAFRALVPVGAVWASYGVATTYVTADAIDKGRKAAAAHGERPGKAVCVCVAVVDTFVWQALASVAVPGFTINRVCAASHFLLSRTTRWPLPVRKWTTTAIGLSTIPFIITPIDRSVDLLLDSSLRKLYSEGEKED.

The next 3 membrane-spanning stretches (helical) occupy residues 35–55 (ALVP…YVTA), 76–96 (VCVC…SVAV), and 130–150 (IGLS…DLLL).

The protein belongs to the MTFP1 family.

It localises to the mitochondrion inner membrane. In terms of biological role, involved in the mitochondrial division probably by regulating membrane fission. Loss-of-function leads to apoptosis. This chain is Mitochondrial fission process protein 1 (mtfp1), found in Danio rerio (Zebrafish).